Consider the following 212-residue polypeptide: Redox-sensing transcriptional repressor Rex (212 aa).

The H-T-H motif DNA-binding region spans 17–56 (LYARSLRYLLEEGVHSVSSQELGERINVTAAQIRKDLSYF). 91–96 (GIGLLG) serves as a coordination point for NAD(+).

Belongs to the transcriptional regulatory Rex family. Homodimer.

It is found in the cytoplasm. Functionally, modulates transcription in response to changes in cellular NADH/NAD(+) redox state. The polypeptide is Redox-sensing transcriptional repressor Rex (Chloroflexus aurantiacus (strain ATCC 29366 / DSM 635 / J-10-fl)).